The primary structure comprises 645 residues: Phosphomethylpyrimidine synthase (645 aa).

A compositionally biased stretch (polar residues) spans 1–12 (MSHNTVIPTTDI). The segment at 1-25 (MSHNTVIPTTDISPKPDPARPRKAQ) is disordered. Residues Asn253, Met282, Tyr311, His347, 367-369 (SRG), 408-411 (DGLR), and Glu447 contribute to the substrate site. His451 contributes to the Zn(2+) binding site. Tyr474 contributes to the substrate binding site. His515 is a Zn(2+) binding site. [4Fe-4S] cluster contacts are provided by Cys595, Cys598, and Cys603.

Belongs to the ThiC family. As to quaternary structure, homodimer. The cofactor is [4Fe-4S] cluster.

The enzyme catalyses 5-amino-1-(5-phospho-beta-D-ribosyl)imidazole + S-adenosyl-L-methionine = 4-amino-2-methyl-5-(phosphooxymethyl)pyrimidine + CO + 5'-deoxyadenosine + formate + L-methionine + 3 H(+). It functions in the pathway cofactor biosynthesis; thiamine diphosphate biosynthesis. Catalyzes the synthesis of the hydroxymethylpyrimidine phosphate (HMP-P) moiety of thiamine from aminoimidazole ribotide (AIR) in a radical S-adenosyl-L-methionine (SAM)-dependent reaction. This Photorhabdus laumondii subsp. laumondii (strain DSM 15139 / CIP 105565 / TT01) (Photorhabdus luminescens subsp. laumondii) protein is Phosphomethylpyrimidine synthase.